The sequence spans 239 residues: Putative antitoxin VapB45 (239 aa).

Functionally, possibly the antitoxin component of a type II toxin-antitoxin (TA) system. Its cognate toxin is VapC45. The chain is Putative antitoxin VapB45 from Mycobacterium tuberculosis (strain ATCC 25618 / H37Rv).